The primary structure comprises 335 residues: MARWRRIVALGGGAWGTALANLAARAGAEDVALWTRDAAHVAEMTATGVNARRLPGIPLHSALRPTTDLGVVAEADLILAVVPSQSLRGVLEQIQSTLPTPTPLILCCKGIEHETGLFMSEVAADVLGDQPVAVLSGPSFAEDVARGKPTAVTLAAYDGALAAALVEALAAPWFRLYHTHDVRGVEIGGAAKNVLAIANGIAAGRDLGASAGAALIARGFAELCRFGRAFGVEMGTLAGLSGLGDLVLTCGSAQSRNYSFGHALGRGTSINDARANIGLVEGFFTCGILNDLARAKGVDMPIAQAVEAVLAERMGVDEAIATLLARPSKAELAGF.

NADPH is bound by residues W15, R36, and K109. Sn-glycerol 3-phosphate-binding residues include K109, G137, and S139. An NADPH-binding site is contributed by A141. Sn-glycerol 3-phosphate is bound by residues K192, D245, S255, R256, and N257. K192 serves as the catalytic Proton acceptor. NADPH is bound at residue R256. NADPH contacts are provided by L279 and E281.

The protein belongs to the NAD-dependent glycerol-3-phosphate dehydrogenase family.

The protein resides in the cytoplasm. It carries out the reaction sn-glycerol 3-phosphate + NAD(+) = dihydroxyacetone phosphate + NADH + H(+). The catalysed reaction is sn-glycerol 3-phosphate + NADP(+) = dihydroxyacetone phosphate + NADPH + H(+). It functions in the pathway membrane lipid metabolism; glycerophospholipid metabolism. Functionally, catalyzes the reduction of the glycolytic intermediate dihydroxyacetone phosphate (DHAP) to sn-glycerol 3-phosphate (G3P), the key precursor for phospholipid synthesis. The polypeptide is Glycerol-3-phosphate dehydrogenase [NAD(P)+] (Beijerinckia indica subsp. indica (strain ATCC 9039 / DSM 1715 / NCIMB 8712)).